A 66-amino-acid chain; its full sequence is Large ribosomal subunit protein bL35 (66 aa).

Residues 1–16 (MPKQKTHRASAKRFKR) are compositionally biased toward basic residues. A disordered region spans residues 1–21 (MPKQKTHRASAKRFKRTGSGG).

It belongs to the bacterial ribosomal protein bL35 family.

This chain is Large ribosomal subunit protein bL35, found in Streptococcus sanguinis (strain SK36).